Reading from the N-terminus, the 331-residue chain is MKFTGSPLLWPSWLPLPAPPPPLPSVTRRRDPRTVGKRAAITDACDVGYGAGTTGGSGGTTTTVSTPAQFTAAATSDEKAVIVVKGAITGATKVKVGSNKSIIGRAGSSLTGVGLYINKQENVIVRNMKISKVLADNGDRIGIQASSKVWVDHCDLSSDKKNNGKDYYDGLLDITHASMAVTVSNTYIHDHYKGSLVGHSDSNSAEDTGKLYVTYANNHWYNVASRNPSVRFGNVHIFNNYAEKLETSGVNTRMGAQLLIESSVFSDTKKAVTFLDSKSTGYAVVNDVDLGGSTNDRPQGTFTKPDYSYTLLGSSKVKAAVVGTAGQTLTF.

The first 25 residues, 1 to 25, serve as a signal peptide directing secretion; that stretch reads MKFTGSPLLWPSWLPLPAPPPPLPS. N-linked (GlcNAc...) asparagine glycosylation occurs at N99. Ca(2+) is bound by residues D139, D169, and D173. Residue R226 is part of the active site.

This sequence belongs to the polysaccharide lyase 1 family. It depends on Ca(2+) as a cofactor.

The protein resides in the secreted. It catalyses the reaction Eliminative cleavage of (1-&gt;4)-alpha-D-galacturonan to give oligosaccharides with 4-deoxy-alpha-D-galact-4-enuronosyl groups at their non-reducing ends.. It participates in glycan metabolism; pectin degradation; 2-dehydro-3-deoxy-D-gluconate from pectin: step 2/5. In terms of biological role, acts as a virulence factor active in plant tissue maceration. The protein is Pectate lyase B (PLB) of Colletotrichum gloeosporioides (Anthracnose fungus).